We begin with the raw amino-acid sequence, 131 residues long: MRHGNGLRKLNRTSSHRLAMLRNMSNSLLEHEVIKTTLPKAKELRMVVEPLITLGKKDNLANRRLAFNRTRDRDFVTKLFTELGPRYATRPGGYLRILKFGFRHGDNAPMALVELVDRPEVEETAAVAEEA.

It belongs to the bacterial ribosomal protein bL17 family. In terms of assembly, part of the 50S ribosomal subunit. Contacts protein L32.

This is Large ribosomal subunit protein bL17 from Polynucleobacter necessarius subsp. necessarius (strain STIR1).